The primary structure comprises 643 residues: Transmembrane protein 62 (643 aa).

Residues 9–29 traverse the membrane as a helical segment; the sequence is VVAGLAAAAVAALLLEHYGLA. Asn-180 carries an N-linked (GlcNAc...) asparagine glycan. The next 4 membrane-spanning stretches (helical) occupy residues 431-451, 484-504, 532-552, and 572-592; these read IVAR…LITF, YSVL…GEII, GIIQ…WSLL, and IIPV…SCYF.

It is found in the membrane. The chain is Transmembrane protein 62 (Tmem62) from Mus musculus (Mouse).